Consider the following 395-residue polypeptide: Argininosuccinate synthase (395 aa).

ATP is bound by residues 9 to 17 (AYSGGLDTS) and Ala-37. L-citrulline is bound by residues Tyr-87 and Ser-92. An ATP-binding site is contributed by Gly-117. Positions 119, 123, and 124 each coordinate L-aspartate. Asn-123 serves as a coordination point for L-citrulline. 5 residues coordinate L-citrulline: Arg-127, Ser-173, Ser-182, Glu-258, and Tyr-270.

Belongs to the argininosuccinate synthase family. Type 1 subfamily. As to quaternary structure, homotetramer.

Its subcellular location is the cytoplasm. The catalysed reaction is L-citrulline + L-aspartate + ATP = 2-(N(omega)-L-arginino)succinate + AMP + diphosphate + H(+). It participates in amino-acid biosynthesis; L-arginine biosynthesis; L-arginine from L-ornithine and carbamoyl phosphate: step 2/3. The polypeptide is Argininosuccinate synthase (Methanospirillum hungatei JF-1 (strain ATCC 27890 / DSM 864 / NBRC 100397 / JF-1)).